The following is a 255-amino-acid chain: Staphylococcal secretory antigen ssaA1 (255 aa).

The first 26 residues, 1–26, serve as a signal peptide directing secretion; the sequence is MKKIVTATIATAGLATIAFAGHDAQA. Repeat copies occupy residues 75–78, 88–91, and 98–101. The 3 X 4 AA repeats of Y-N-N-Y stretch occupies residues 75–101; the sequence is YNNYNTYSYNNASYNNYYNHSYQYNNY. Positions 134 to 255 constitute a Peptidase C51 domain; that stretch reads AAPSSNGRSI…NQAGSYNFIH (122 aa).

The protein localises to the secreted. In terms of biological role, not known; immunogenic protein. This Staphylococcus aureus (strain MW2) protein is Staphylococcal secretory antigen ssaA1 (ssaA1).